Here is a 116-residue protein sequence, read N- to C-terminus: Ribosome-binding factor A (116 aa).

Belongs to the RbfA family. In terms of assembly, monomer. Binds 30S ribosomal subunits, but not 50S ribosomal subunits or 70S ribosomes.

It is found in the cytoplasm. In terms of biological role, one of several proteins that assist in the late maturation steps of the functional core of the 30S ribosomal subunit. Associates with free 30S ribosomal subunits (but not with 30S subunits that are part of 70S ribosomes or polysomes). Required for efficient processing of 16S rRNA. May interact with the 5'-terminal helix region of 16S rRNA. The protein is Ribosome-binding factor A of Mycoplasma pneumoniae (strain ATCC 29342 / M129 / Subtype 1) (Mycoplasmoides pneumoniae).